A 388-amino-acid polypeptide reads, in one-letter code: DNA primase small subunit PriS (388 aa).

Active-site residues include D100, D102, and D288.

Belongs to the eukaryotic-type primase small subunit family. As to quaternary structure, heterodimer of a small subunit (PriS) and a large subunit (PriL). Mg(2+) serves as cofactor. It depends on Mn(2+) as a cofactor.

In terms of biological role, catalytic subunit of DNA primase, an RNA polymerase that catalyzes the synthesis of short RNA molecules used as primers for DNA polymerase during DNA replication. The small subunit contains the primase catalytic core and has DNA synthesis activity on its own. Binding to the large subunit stabilizes and modulates the activity, increasing the rate of DNA synthesis while decreasing the length of the DNA fragments, and conferring RNA synthesis capability. The DNA polymerase activity may enable DNA primase to also catalyze primer extension after primer synthesis. May also play a role in DNA repair. The protein is DNA primase small subunit PriS of Methanospirillum hungatei JF-1 (strain ATCC 27890 / DSM 864 / NBRC 100397 / JF-1).